A 642-amino-acid chain; its full sequence is Threonine--tRNA ligase (642 aa).

A TGS domain is found at 1-61; it reads MPVITLPDGS…ETDAELSIIT (61 aa). The interval 243–534 is catalytic; it reads DHRKIGKQLD…LIEEYAGRFP (292 aa). Zn(2+)-binding residues include Cys-334, His-385, and His-511.

This sequence belongs to the class-II aminoacyl-tRNA synthetase family. As to quaternary structure, homodimer. Requires Zn(2+) as cofactor.

The protein localises to the cytoplasm. The enzyme catalyses tRNA(Thr) + L-threonine + ATP = L-threonyl-tRNA(Thr) + AMP + diphosphate + H(+). Catalyzes the attachment of threonine to tRNA(Thr) in a two-step reaction: L-threonine is first activated by ATP to form Thr-AMP and then transferred to the acceptor end of tRNA(Thr). Also edits incorrectly charged L-seryl-tRNA(Thr). The protein is Threonine--tRNA ligase of Shewanella sp. (strain MR-7).